The sequence spans 199 residues: Cutinase CUT1 (199 aa).

Residues 1-18 (MKFTTLATLALGAVSALA) form the signal peptide. The propeptide occupies 19–27 (APVTELESR). Gln28 is modified (pyrrolidone carboxylic acid). A disulfide bond links Cys31 and Cys105. Ser116 acts as the Nucleophile in catalysis. Cys164 and Cys171 are joined by a disulfide. Asp168 is an active-site residue. The active-site Proton donor/acceptor is the His181.

It belongs to the cutinase family. The 2 disulfide bonds play a critical role in holding the catalytic residues in juxta-position; reduction of the disulfide bridges results in the complete inactivation of the enzyme.

The enzyme catalyses cutin + H2O = cutin monomers.. Its function is as follows. Catalyzes the hydrolysis of complex carboxylic polyesters found in the cell wall of plants. Degrades cutin, a macromolecule that forms the structure of the plant cuticle. Also degrades suberin, a specialized macromolecule found in the cell wall of various plant tissues. The sequence is that of Cutinase CUT1 from Coprinopsis cinerea (Inky cap fungus).